Reading from the N-terminus, the 444-residue chain is Methionine aminopeptidase 2-1 (444 aa).

The segment at 1 to 92 is disordered; it reads MAAQVTEKLQ…VPVSNLFPNN (92 aa). Over residues 15–29 the composition is skewed to polar residues; that stretch reads NGQNGDAKANSTAVG. The segment covering 34–45 has biased composition (acidic residues); that stretch reads GEAEDDSDDEKE. The span at 59–73 shows a compositional bias: basic residues; it reads AKKKKRKSKKKKKGG. Histidine 197 is a binding site for substrate. 3 residues coordinate a divalent metal cation: aspartate 217, aspartate 228, and histidine 297. Residue histidine 305 participates in substrate binding. Residues glutamate 330 and glutamate 425 each coordinate a divalent metal cation.

It belongs to the peptidase M24A family. Methionine aminopeptidase eukaryotic type 2 subfamily. The cofactor is Co(2+). Zn(2+) is required as a cofactor. Mn(2+) serves as cofactor. It depends on Fe(2+) as a cofactor.

It localises to the cytoplasm. It catalyses the reaction Release of N-terminal amino acids, preferentially methionine, from peptides and arylamides.. Functionally, cotranslationally removes the N-terminal methionine from nascent proteins. The N-terminal methionine is often cleaved when the second residue in the primary sequence is small and uncharged (Met-Ala-, Cys, Gly, Pro, Ser, Thr, or Val). This is Methionine aminopeptidase 2-1 from Neosartorya fischeri (strain ATCC 1020 / DSM 3700 / CBS 544.65 / FGSC A1164 / JCM 1740 / NRRL 181 / WB 181) (Aspergillus fischerianus).